We begin with the raw amino-acid sequence, 854 residues long: Aryl hydrocarbon receptor (854 aa).

Positions 1 to 9 (MSSGANITY) are excised as a propeptide. The tract at residues 1–38 (MSSGANITYASRKRRKPVQKTVKPIPAEGIKSNPSKRH) is disordered. 2 short sequence motifs (nuclear localization signal) span residues 12 to 15 (RKRR) and 36 to 41 (KRHRDR). In terms of domain architecture, bHLH spans 26–79 (PAEGIKSNPSKRHRDRLNTELDRLASLLPFPQDVINKLDKLSVLRLSVSYLRAK). Positions 37–65 (RHRDRLNTELDRLASLLPFPQDVINKLDK) are DNA-binding. Required for maintaining the overall integrity of the AHR:ARNT heterodimer and its transcriptional activity regions lie at residues 49–81 (LASL…AKSF), 116–124 (LLQALNGFV), and 264–266 (FAI). The Nuclear export signal motif lies at 63–71 (LDKLSVLRL). The region spanning 111 to 175 (QEGEFLLQAL…AEFQRQLHWA (65 aa)) is the PAS 1 domain. The PAS 2 domain occupies 270–340 (LQPPSILEIR…CAESHIRMIK (71 aa)). A PAC domain is found at 346-387 (MTVFRLLAKHSRWRWVQSNARLIYRNGRPDYIIATQRPLTDE). A disordered region spans residues 425 to 452 (LPIRTKSNTSRKDWAPQSTPSKDSFHPS). A compositionally biased stretch (polar residues) spans 440–452 (PQSTPSKDSFHPS).

In terms of assembly, homodimer. Heterodimer; efficient DNA binding requires dimerization with another bHLH protein. Interacts with ARNT; the heterodimer ARNT:AHR binds to core DNA sequence 5'-TGCGTG-3' within the dioxin response element (DRE) of target gene promoters and activates their transcription. Binds MYBBP1A. Interacts with coactivators including SRC-1, RIP140 and NOCA7, and with the corepressor SMRT. Interacts with NEDD8 and IVNS1ABP. Interacts with BMAL1. Interacts with HSP90AB1. Interacts with TIPARP; leading to mono-ADP-ribosylation of AHR and subsequent inhibition of AHR. Mono-ADP-ribosylated, leading to inhibit transcription activator activity of AHR.

Its subcellular location is the cytoplasm. The protein localises to the nucleus. Functionally, ligand-activated transcription factor that enables cells to adapt to changing conditions by sensing compounds from the environment, diet, microbiome and cellular metabolism, and which plays important roles in development, immunity and cancer. Upon ligand binding, translocates into the nucleus, where it heterodimerizes with ARNT and induces transcription by binding to xenobiotic response elements (XRE). Regulates a variety of biological processes, including angiogenesis, hematopoiesis, drug and lipid metabolism, cell motility and immune modulation. Xenobiotics can act as ligands: upon xenobiotic-binding, activates the expression of multiple phase I and II xenobiotic chemical metabolizing enzyme genes (such as the CYP1A1 gene). Mediates biochemical and toxic effects of halogenated aromatic hydrocarbons. Next to xenobiotics, natural ligands derived from plants, microbiota, and endogenous metabolism are potent AHR agonists. Tryptophan (Trp) derivatives constitute an important class of endogenous AHR ligands. Acts as a negative regulator of anti-tumor immunity: indoles and kynurenic acid generated by Trp catabolism act as ligand and activate AHR, thereby promoting AHR-driven cancer cell motility and suppressing adaptive immunity. Regulates the circadian clock by inhibiting the basal and circadian expression of the core circadian component PER1. Inhibits PER1 by repressing the CLOCK-BMAL1 heterodimer mediated transcriptional activation of PER1. The heterodimer ARNT:AHR binds to core DNA sequence 5'-TGCGTG-3' within the dioxin response element (DRE) of target gene promoters and activates their transcription. The protein is Aryl hydrocarbon receptor (Ahr) of Mus spretus (Western Mediterranean mouse).